A 212-amino-acid polypeptide reads, in one-letter code: Adenine phosphoribosyltransferase (212 aa).

Belongs to the purine/pyrimidine phosphoribosyltransferase family. In terms of assembly, homodimer.

The protein resides in the cytoplasm. It catalyses the reaction AMP + diphosphate = 5-phospho-alpha-D-ribose 1-diphosphate + adenine. It participates in purine metabolism; AMP biosynthesis via salvage pathway; AMP from adenine: step 1/1. Its function is as follows. Catalyzes a salvage reaction resulting in the formation of AMP, that is energically less costly than de novo synthesis. The polypeptide is Adenine phosphoribosyltransferase (Mycobacterium tuberculosis (strain ATCC 25618 / H37Rv)).